Here is a 253-residue protein sequence, read N- to C-terminus: 2,3-bisphosphoglycerate-dependent phosphoglycerate mutase (253 aa).

Substrate-binding positions include 12-19, 25-26, R64, 91-94, K102, 118-119, and 187-188; these read RHGESEWN, TG, ERHY, RR, and GN. H13 acts as the Tele-phosphohistidine intermediate in catalysis. The Proton donor/acceptor role is filled by E91.

This sequence belongs to the phosphoglycerate mutase family. BPG-dependent PGAM subfamily.

The enzyme catalyses (2R)-2-phosphoglycerate = (2R)-3-phosphoglycerate. It participates in carbohydrate degradation; glycolysis; pyruvate from D-glyceraldehyde 3-phosphate: step 3/5. Its function is as follows. Catalyzes the interconversion of 2-phosphoglycerate and 3-phosphoglycerate. The polypeptide is 2,3-bisphosphoglycerate-dependent phosphoglycerate mutase (Streptomyces griseus subsp. griseus (strain JCM 4626 / CBS 651.72 / NBRC 13350 / KCC S-0626 / ISP 5235)).